Reading from the N-terminus, the 147-residue chain is Hemoglobin subunit beta (147 aa).

An N-acetylvaline modification is found at Val2. One can recognise a Globin domain in the interval 3-147 (HLTPEEKSAV…VANALAHKYH (145 aa)). Thr13 carries the phosphothreonine modification. Ser45 carries the phosphoserine modification. Lys60 carries the post-translational modification N6-acetyllysine. His64 serves as a coordination point for heme b. Position 83 is an N6-acetyllysine (Lys83). His93 is a binding site for heme b. Cys94 is modified (S-nitrosocysteine). Lys145 carries the post-translational modification N6-acetyllysine.

Belongs to the globin family. In terms of assembly, heterotetramer of two alpha chains and two beta chains. Red blood cells.

Its function is as follows. Involved in oxygen transport from the lung to the various peripheral tissues. The chain is Hemoglobin subunit beta (HBB) from Gorilla gorilla gorilla (Western lowland gorilla).